Here is a 271-residue protein sequence, read N- to C-terminus: Formamidopyrimidine-DNA glycosylase (271 aa).

The Schiff-base intermediate with DNA role is filled by Pro2. The active-site Proton donor is Glu3. Residue Lys58 is the Proton donor; for beta-elimination activity of the active site. DNA contacts are provided by His92, Arg111, and Arg152. Residues 237-271 form an FPG-type zinc finger; that stretch reads SVYGREGEACKQCGRVLKHATIGQRATVWCGSCQR. Arg261 serves as the catalytic Proton donor; for delta-elimination activity.

It belongs to the FPG family. In terms of assembly, monomer. The cofactor is Zn(2+).

It catalyses the reaction Hydrolysis of DNA containing ring-opened 7-methylguanine residues, releasing 2,6-diamino-4-hydroxy-5-(N-methyl)formamidopyrimidine.. The enzyme catalyses 2'-deoxyribonucleotide-(2'-deoxyribose 5'-phosphate)-2'-deoxyribonucleotide-DNA = a 3'-end 2'-deoxyribonucleotide-(2,3-dehydro-2,3-deoxyribose 5'-phosphate)-DNA + a 5'-end 5'-phospho-2'-deoxyribonucleoside-DNA + H(+). Its function is as follows. Involved in base excision repair of DNA damaged by oxidation or by mutagenic agents. Acts as a DNA glycosylase that recognizes and removes damaged bases. Has a preference for oxidized purines, such as 7,8-dihydro-8-oxoguanine (8-oxoG). Has AP (apurinic/apyrimidinic) lyase activity and introduces nicks in the DNA strand. Cleaves the DNA backbone by beta-delta elimination to generate a single-strand break at the site of the removed base with both 3'- and 5'-phosphates. The sequence is that of Formamidopyrimidine-DNA glycosylase from Xanthomonas euvesicatoria pv. vesicatoria (strain 85-10) (Xanthomonas campestris pv. vesicatoria).